The following is a 491-amino-acid chain: Glutamyl-tRNA(Gln) amidotransferase subunit A (491 aa).

Catalysis depends on charge relay system residues lysine 80 and serine 155. Serine 179 acts as the Acyl-ester intermediate in catalysis.

The protein belongs to the amidase family. GatA subfamily. As to quaternary structure, heterotrimer of A, B and C subunits.

It carries out the reaction L-glutamyl-tRNA(Gln) + L-glutamine + ATP + H2O = L-glutaminyl-tRNA(Gln) + L-glutamate + ADP + phosphate + H(+). In terms of biological role, allows the formation of correctly charged Gln-tRNA(Gln) through the transamidation of misacylated Glu-tRNA(Gln) in organisms which lack glutaminyl-tRNA synthetase. The reaction takes place in the presence of glutamine and ATP through an activated gamma-phospho-Glu-tRNA(Gln). The sequence is that of Glutamyl-tRNA(Gln) amidotransferase subunit A from Salinispora tropica (strain ATCC BAA-916 / DSM 44818 / JCM 13857 / NBRC 105044 / CNB-440).